Here is a 217-residue protein sequence, read N- to C-terminus: MGILDPYKGFGVTFGTMFKKPTTEQYPEEKKETAPRFHGRHQLNRHPDGLEKCVGCELCAWACPADAIYVEGADNTEAERYSPGERYGRVYQINYLRCILCGLCIEACPTRALTMSNDYELADDSRQDLIFTKEQLLAPLREGMEAPPHPMRLGSSETDYYTRDPDAPLPWQASGQEQVAGQAAELEAADVIARRTAGEHSRADEVPAHGAGSERPR.

Residues 22–41 are disordered; that stretch reads TTEQYPEEKKETAPRFHGRH. 2 consecutive 4Fe-4S ferredoxin-type domains span residues 43–73 and 89–118; these read LNRHPDGLEKCVGCELCAWACPADAIYVEGA and RVYQINYLRCILCGLCIEACPTRALTMSND. Residues cysteine 53, cysteine 56, cysteine 59, cysteine 63, cysteine 98, cysteine 101, cysteine 104, and cysteine 108 each contribute to the [4Fe-4S] cluster site. Residues 193 to 217 are disordered; that stretch reads ARRTAGEHSRADEVPAHGAGSERPR.

Belongs to the complex I 23 kDa subunit family. As to quaternary structure, NDH-1 is composed of 14 different subunits. Subunits NuoA, H, J, K, L, M, N constitute the membrane sector of the complex. Requires [4Fe-4S] cluster as cofactor.

The protein resides in the cell membrane. It carries out the reaction a quinone + NADH + 5 H(+)(in) = a quinol + NAD(+) + 4 H(+)(out). Its function is as follows. NDH-1 shuttles electrons from NADH, via FMN and iron-sulfur (Fe-S) centers, to quinones in the respiratory chain. The immediate electron acceptor for the enzyme in this species is believed to be ubiquinone. Couples the redox reaction to proton translocation (for every two electrons transferred, four hydrogen ions are translocated across the cytoplasmic membrane), and thus conserves the redox energy in a proton gradient. This chain is NADH-quinone oxidoreductase subunit I, found in Frankia casuarinae (strain DSM 45818 / CECT 9043 / HFP020203 / CcI3).